The chain runs to 239 residues: Ribosomal RNA small subunit methyltransferase G (239 aa).

Residues G77, F82, 128–129 (AE), and R147 contribute to the S-adenosyl-L-methionine site.

This sequence belongs to the methyltransferase superfamily. RNA methyltransferase RsmG family.

It localises to the cytoplasm. In terms of biological role, specifically methylates the N7 position of guanine in position 535 of 16S rRNA. This is Ribosomal RNA small subunit methyltransferase G from Bacillus mycoides (strain KBAB4) (Bacillus weihenstephanensis).